The chain runs to 223 residues: Ribose-5-phosphate isomerase A (223 aa).

Substrate-binding positions include T32–T35, D85–D88, and K98–G101. E107 serves as the catalytic Proton acceptor. K125 lines the substrate pocket.

Belongs to the ribose 5-phosphate isomerase family. As to quaternary structure, homodimer.

It catalyses the reaction aldehydo-D-ribose 5-phosphate = D-ribulose 5-phosphate. It functions in the pathway carbohydrate degradation; pentose phosphate pathway; D-ribose 5-phosphate from D-ribulose 5-phosphate (non-oxidative stage): step 1/1. In terms of biological role, catalyzes the reversible conversion of ribose-5-phosphate to ribulose 5-phosphate. In Pseudomonas syringae pv. syringae (strain B728a), this protein is Ribose-5-phosphate isomerase A.